Reading from the N-terminus, the 133-residue chain is Agouti-signaling protein (133 aa).

Positions 1–22 are cleaved as a signal peptide; the sequence is MDVIHLFLATLLVSLCFLTAYS. The span at 26–36 shows a compositional bias: basic and acidic residues; that stretch reads PEEKPKDDRSL. Positions 26-83 are disordered; the sequence is PEEKPKDDRSLRNNSSMNLLDSPSVSIMALNKKSKKISRKEAEKKKRSSKKKASMTKV. Positions 37–50 are enriched in polar residues; sequence RNNSSMNLLDSPSV. Asn38 and Asn39 each carry an N-linked (GlcNAc...) asparagine glycan. Over residues 70–79 the composition is skewed to basic residues; sequence KKRSSKKKAS. 5 disulfide bridges follow: Cys94–Cys109, Cys101–Cys115, Cys108–Cys126, Cys112–Cys133, and Cys117–Cys124. The Agouti domain maps to 94–133; sequence CVATRDSCKPPAPACCDPCASCQCRFFRSACSCRVLTRTC.

The protein localises to the secreted. Its function is as follows. Involved in the regulation of melanogenesis. The binding of ASP to MC1R precludes alpha-MSH initiated signaling and thus blocks production of cAMP, leading to a down-regulation of eumelanogenesis (brown/black pigment) and thus increasing synthesis of pheomelanin (yellow/red pigment). In Equus caballus (Horse), this protein is Agouti-signaling protein (ASIP).